Consider the following 244-residue polypeptide: Transcriptional regulatory protein YpdB (244 aa).

The region spanning 2–116 (KVIIVEDEFL…RITGMLQKLE (115 aa)) is the Response regulatory domain. The residue at position 53 (aspartate 53) is a 4-aspartylphosphate. Positions 139–244 (INLVKDERII…VKEFRQLMHL (106 aa)) constitute an HTH LytTR-type domain.

Post-translationally, phosphorylated by YpdA.

The protein localises to the cytoplasm. Functionally, member of the two-component regulatory system YpdA/YpdB. YpdB regulates expression of yhjX by binding to its promoter region. This chain is Transcriptional regulatory protein YpdB (ypdB), found in Escherichia coli O157:H7.